The primary structure comprises 345 residues: rRNA 2'-O-methyltransferase fibrillarin (345 aa).

Residues 1 to 114 (MGKPGFSPRG…GFKGGKTVTI (114 aa)) form a disordered region. Positions 8–108 (PRGGGGGGGG…RGGGAGGFKG (101 aa)) are enriched in gly residues. Residues Arg9, Arg23, Arg25, Arg41, Arg43, Arg49, Arg52, Arg59, Arg64, Arg72, Arg78, Arg84, Arg89, Arg94, and Arg99 each carry the asymmetric dimethylarginine modification. Residues 198–199 (TT), 217–218 (EF), 242–243 (DA), and 262–265 (DVAQ) each bind S-adenosyl-L-methionine.

Belongs to the methyltransferase superfamily. Fibrillarin family. In terms of assembly, component of box C/D small nucleolar ribonucleoprotein (snoRNP) particles. It is associated with the U3, U8 and U13 small nuclear RNAs. By homology to other fibrillarins, some or all of the N-terminal domain arginines are modified to asymmetric dimethylarginine (DMA).

It localises to the nucleus. Its subcellular location is the nucleolus. The catalysed reaction is L-glutaminyl-[histone H2A] + S-adenosyl-L-methionine = N(5)-methyl-L-glutaminyl-[histone H2A] + S-adenosyl-L-homocysteine + H(+). Functionally, S-adenosyl-L-methionine-dependent methyltransferase that has the ability to methylate both RNAs and proteins. Involved in pre-rRNA processing. Utilizes the methyl donor S-adenosyl-L-methionine to catalyze the site-specific 2'-hydroxyl methylation of ribose moieties in pre-ribosomal RNA. Site specificity is provided by a guide RNA that base pairs with the substrate. Methylation occurs at a characteristic distance from the sequence involved in base pairing with the guide RNA. Also acts as a protein methyltransferase by mediating methylation of 'Gln-105' of histone H2A (H2AQ105me), a modification that impairs binding of the FACT complex and is specifically present at 35S ribosomal DNA locus. In Drosophila erecta (Fruit fly), this protein is rRNA 2'-O-methyltransferase fibrillarin.